A 99-amino-acid chain; its full sequence is Large ribosomal subunit protein uL23 (99 aa).

The protein belongs to the universal ribosomal protein uL23 family. As to quaternary structure, part of the 50S ribosomal subunit. Contacts protein L29, and trigger factor when it is bound to the ribosome.

Its function is as follows. One of the early assembly proteins it binds 23S rRNA. One of the proteins that surrounds the polypeptide exit tunnel on the outside of the ribosome. Forms the main docking site for trigger factor binding to the ribosome. This is Large ribosomal subunit protein uL23 from Blochmanniella floridana.